We begin with the raw amino-acid sequence, 28 residues long: Beta-bungarotoxin B chain-like (28 aa).

The N-terminal stretch at 1 to 24 is a signal peptide; that stretch reads MSSGGLLLLLGLLTLCAELTPVSS.

In terms of assembly, heterodimer; disulfide-linked. The A chains have phospholipase A2 activity and the B chains show homology with the basic protease inhibitors. Expressed by the venom gland.

It is found in the secreted. Functionally, beta-1-bungarotoxin is a presynaptic neurotoxin of the venom. The B chain is homologous to venom basic protease inhibitors but has no protease inhibitor activity and blocks voltage-gated potassium channels (Kv). This is Beta-bungarotoxin B chain-like from Bungarus multicinctus (Many-banded krait).